The sequence spans 637 residues: Sec1 family domain-containing protein 1 (637 aa).

Phosphoserine occurs at positions 32, 298, and 523.

It belongs to the STXBP/unc-18/SEC1 family. As to quaternary structure, interacts with STX17. Interacts with the COG complex via COG4. Interacts with STX5A. In terms of tissue distribution, highly expressed in testis. Detected at lower levels in brain, astrocytes, heart and small intestine.

It is found in the cytoplasm. The protein localises to the endoplasmic reticulum membrane. It localises to the golgi apparatus. The protein resides in the golgi stack membrane. Its function is as follows. Plays a role in SNARE-pin assembly and Golgi-to-ER retrograde transport via its interaction with COG4. Involved in vesicular transport between the endoplasmic reticulum and the Golgi. This Rattus norvegicus (Rat) protein is Sec1 family domain-containing protein 1 (Scfd1).